A 62-amino-acid polypeptide reads, in one-letter code: UPF0434 protein FTL_1400 (62 aa).

It belongs to the UPF0434 family.

This Francisella tularensis subsp. holarctica (strain LVS) protein is UPF0434 protein FTL_1400.